The following is a 118-amino-acid chain: DNA-binding protein MmarC6_0793 (118 aa).

Residues 1 to 12 (MNPEEIRQRRLQ) are compositionally biased toward basic and acidic residues. The interval 1 to 33 (MNPEEIRQRRLQEMQAKAQEQGAQDPEAQRQMQ) is disordered. Low complexity predominate over residues 24–33 (QDPEAQRQMQ).

It belongs to the PDCD5 family.

This chain is DNA-binding protein MmarC6_0793, found in Methanococcus maripaludis (strain C6 / ATCC BAA-1332).